The following is a 470-amino-acid chain: Peripherin (470 aa).

The interval 1 to 99 is head; the sequence is MSHHPSGLRA…FLATRSNEKQ (99 aa). Tyrosine 17 is subject to 3'-nitrotyrosine. Residues serine 28, serine 50, and serine 59 each carry the phosphoserine modification. Residues 97–407 form the IF rod domain; sequence EKQELQELND…KLLEGEESRI (311 aa). Residues 100-132 form a coil 1A region; that stretch reads ELQELNDRFANFIEKVRFLEQQNAALRGELSQA. Residues 133 to 143 form a linker 1 region; sequence RGQEPARADQL. The tract at residues 144 to 239 is coil 1B; sequence CQQELRELRR…KLHEEELRDL (96 aa). Positions 240 to 262 are linker 2; it reads QVSVESQQVQQVEVEATVKPELT. The tract at residues 263–405 is coil 2; that stretch reads AALRDIRAQY…YRKLLEGEES (143 aa). Residue tyrosine 379 is modified to 3'-nitrotyrosine. Residues 406 to 470 form a tail region; it reads RISVPVHSFA…ELDKSSAHSY (65 aa). The segment at 447–470 is disordered; sequence NGEVVTESQKEQRSELDKSSAHSY. The span at 454–470 shows a compositional bias: basic and acidic residues; sequence SQKEQRSELDKSSAHSY. A Phosphotyrosine modification is found at tyrosine 470.

This sequence belongs to the intermediate filament family. As to quaternary structure, forms homodimers (in vitro). Homopolymerizes into a filamentous network (in vitro). Forms heterodimers with NEFL, NEFM or NEFH (in vitro). Interacts with DST (via C-terminus). Interacts with RAB7A; the interaction is direct. Interacts with PRKCE (via phorbol-ester/DAG-type 2 domain). In terms of processing, phosphorylated; phosphorylation increases after nerve injury in regenerating neurons. In terms of tissue distribution, expressed in the neurons of the outer hair cells in the organ of Corti and to a lesser extent in type I spiral ganglion cells.

Its subcellular location is the cytoplasm. It localises to the cytoskeleton. The protein resides in the cell projection. The protein localises to the axon. It is found in the perikaryon. Functionally, class-III neuronal intermediate filament protein. May form an independent structural network without the involvement of other neurofilaments or may cooperate with the neuronal intermediate filament proteins NEFL, NEFH, NEFM and INA to form a filamentous network. Assembly of the neuronal intermediate filaments may be regulated by RAB7A. Plays a role in the development of unmyelinated sensory neurons. May be involved in axon elongation and axon regeneration after injury. Inhibits neurite extension in type II spiral ganglion neurons in the cochlea. This Homo sapiens (Human) protein is Peripherin (PRPH).